A 398-amino-acid polypeptide reads, in one-letter code: MRKKECIAMLLAGGQGSRLGCLTRNIPKPAVSFAGKYRIIDFSLSNCSNSNIDTVGVLTQYKPFALNTYINMGSAWDLNCLNGGIHILPPFVGEAQGSWYKGTANAIYQNMDFINFYNPEYILILSGDHIYQMDYYEMLSCHKQKHAEVTLSAIAVPWEEASRFGVMVTDAGGRIIRFEEKPPRPESNLASMGVYIFNWDVLKEALLEDERDPQSDHDFGKNVLPRLLQQGRRLYSYLFHGYWRDVGTIESYYNANMEVLQEERVDKFFELKQRVFSNEEILAPQHLGERAKIHNSLIGNGCTILGEVRDSVIASGVYVGEGSLIEQSILLPNSEIYEDVRLHKTILGENAIVRAHCRIGDKREGNPPQEGITVIGDHLHIPEGTVISEGENVRKDTA.

Alpha-D-glucose 1-phosphate contacts are provided by residues tyrosine 100, glycine 165, 180 to 181 (EK), and serine 191.

The protein belongs to the bacterial/plant glucose-1-phosphate adenylyltransferase family. In terms of assembly, homotetramer.

It catalyses the reaction alpha-D-glucose 1-phosphate + ATP + H(+) = ADP-alpha-D-glucose + diphosphate. Its pathway is glycan biosynthesis; glycogen biosynthesis. In terms of biological role, involved in the biosynthesis of ADP-glucose, a building block required for the elongation reactions to produce glycogen. Catalyzes the reaction between ATP and alpha-D-glucose 1-phosphate (G1P) to produce pyrophosphate and ADP-Glc. The sequence is that of Glucose-1-phosphate adenylyltransferase from Desulfitobacterium hafniense (strain DSM 10664 / DCB-2).